Here is a 347-residue protein sequence, read N- to C-terminus: Phosphoribosylformylglycinamidine cyclo-ligase (347 aa).

Belongs to the AIR synthase family.

It localises to the cytoplasm. It catalyses the reaction 2-formamido-N(1)-(5-O-phospho-beta-D-ribosyl)acetamidine + ATP = 5-amino-1-(5-phospho-beta-D-ribosyl)imidazole + ADP + phosphate + H(+). It functions in the pathway purine metabolism; IMP biosynthesis via de novo pathway; 5-amino-1-(5-phospho-D-ribosyl)imidazole from N(2)-formyl-N(1)-(5-phospho-D-ribosyl)glycinamide: step 2/2. In Hydrogenovibrio crunogenus (strain DSM 25203 / XCL-2) (Thiomicrospira crunogena), this protein is Phosphoribosylformylglycinamidine cyclo-ligase.